We begin with the raw amino-acid sequence, 409 residues long: Arginine biosynthesis bifunctional protein ArgJ (409 aa).

6 residues coordinate substrate: Thr157, Lys183, Thr194, Glu281, Asn404, and Ser409. The active-site Nucleophile is Thr194.

Belongs to the ArgJ family. As to quaternary structure, heterotetramer of two alpha and two beta chains.

The protein resides in the cytoplasm. The catalysed reaction is N(2)-acetyl-L-ornithine + L-glutamate = N-acetyl-L-glutamate + L-ornithine. It catalyses the reaction L-glutamate + acetyl-CoA = N-acetyl-L-glutamate + CoA + H(+). It participates in amino-acid biosynthesis; L-arginine biosynthesis; L-ornithine and N-acetyl-L-glutamate from L-glutamate and N(2)-acetyl-L-ornithine (cyclic): step 1/1. Its pathway is amino-acid biosynthesis; L-arginine biosynthesis; N(2)-acetyl-L-ornithine from L-glutamate: step 1/4. Catalyzes two activities which are involved in the cyclic version of arginine biosynthesis: the synthesis of N-acetylglutamate from glutamate and acetyl-CoA as the acetyl donor, and of ornithine by transacetylation between N(2)-acetylornithine and glutamate. This chain is Arginine biosynthesis bifunctional protein ArgJ, found in Zymomonas mobilis subsp. mobilis (strain ATCC 31821 / ZM4 / CP4).